The primary structure comprises 363 residues: Flagellar P-ring protein 2 (363 aa).

Positions 1-20 (MKLRTCCISLMLLLALPLQA) are cleaved as a signal peptide.

The protein belongs to the FlgI family. In terms of assembly, the basal body constitutes a major portion of the flagellar organelle and consists of four rings (L,P,S, and M) mounted on a central rod.

It is found in the periplasm. Its subcellular location is the bacterial flagellum basal body. Functionally, assembles around the rod to form the L-ring and probably protects the motor/basal body from shearing forces during rotation. The protein is Flagellar P-ring protein 2 of Photobacterium profundum (strain SS9).